Here is a 459-residue protein sequence, read N- to C-terminus: Cysteine--tRNA ligase (459 aa).

C28 provides a ligand contact to Zn(2+). A 'HIGH' region motif is present at residues 30–40 (MTVYDFCHLGH). Residues C209, H234, and E238 each coordinate Zn(2+). Residues 266 to 270 (KMAKS) carry the 'KMSKS' region motif. An ATP-binding site is contributed by K269. The tract at residues 440 to 459 (QARGIELEDTPEGTKWRRTR) is disordered.

It belongs to the class-I aminoacyl-tRNA synthetase family. In terms of assembly, monomer. The cofactor is Zn(2+).

Its subcellular location is the cytoplasm. The catalysed reaction is tRNA(Cys) + L-cysteine + ATP = L-cysteinyl-tRNA(Cys) + AMP + diphosphate. This is Cysteine--tRNA ligase from Halorhodospira halophila (strain DSM 244 / SL1) (Ectothiorhodospira halophila (strain DSM 244 / SL1)).